We begin with the raw amino-acid sequence, 34 residues long: Photosystem II reaction center protein T (34 aa).

Residues 3–23 (ALVYTFLLVGTLGIIFFAIFF) traverse the membrane as a helical segment.

The protein belongs to the PsbT family. PSII is composed of 1 copy each of membrane proteins PsbA, PsbB, PsbC, PsbD, PsbE, PsbF, PsbH, PsbI, PsbJ, PsbK, PsbL, PsbM, PsbT, PsbY, PsbZ, Psb30/Ycf12, at least 3 peripheral proteins of the oxygen-evolving complex and a large number of cofactors. It forms dimeric complexes.

It is found in the plastid. Its subcellular location is the chloroplast thylakoid membrane. In terms of biological role, found at the monomer-monomer interface of the photosystem II (PS II) dimer, plays a role in assembly and dimerization of PSII. PSII is a light-driven water plastoquinone oxidoreductase, using light energy to abstract electrons from H(2)O, generating a proton gradient subsequently used for ATP formation. This is Photosystem II reaction center protein T from Klebsormidium bilatum (Filamentous green alga).